The chain runs to 2628 residues: Hemagglutinin A (2628 aa).

Residues 1–24 form the signal peptide; that stretch reads MRKLNSLFSLAVLLSLLCWGQTAA. 5 peptidase C25-like regions span residues 25–539, 540–995, 996–1451, 1452–1907, and 2074–2628; these read AQGG…TPPP, GGTS…TPPP, and IDAD…LAVK. Disordered stretches follow at residues 493-512, 520-546, 944-1002, 1400-1458, 1856-1881, 1890-1909, and 2336-2358; these read WDAP…LSES, SWKT…SFAG, KWDA…SFAG, KWDA…SESF, KTID…PPGG, and SSWK…PPGG. The segment covering 496–508 has biased composition (low complexity); it reads PNGTPNPNPGTTT.

This sequence belongs to the peptidase C25 family.

Agglutinates erythrocytes. This is Hemagglutinin A (hagA) from Porphyromonas gingivalis (Bacteroides gingivalis).